A 204-amino-acid polypeptide reads, in one-letter code: Inactive ribonuclease-like protein 9 (204 aa).

The signal sequence occupies residues 1-26 (MMRTLITTHPLLLLLLLQQLLQPVQF). 3 disulfide bridges follow: C97-C152, C115-C167, and C122-C129. Residues N130 and N142 are each glycosylated (N-linked (GlcNAc...) asparagine).

The protein belongs to the pancreatic ribonuclease family.

It is found in the secreted. Does not exhibit any ribonuclease activity. The protein is Inactive ribonuclease-like protein 9 (RNASE9) of Macaca mulatta (Rhesus macaque).